The sequence spans 345 residues: Phosphoribosylformylglycinamidine cyclo-ligase (345 aa).

Belongs to the AIR synthase family.

It localises to the cytoplasm. The enzyme catalyses 2-formamido-N(1)-(5-O-phospho-beta-D-ribosyl)acetamidine + ATP = 5-amino-1-(5-phospho-beta-D-ribosyl)imidazole + ADP + phosphate + H(+). Its pathway is purine metabolism; IMP biosynthesis via de novo pathway; 5-amino-1-(5-phospho-D-ribosyl)imidazole from N(2)-formyl-N(1)-(5-phospho-D-ribosyl)glycinamide: step 2/2. The polypeptide is Phosphoribosylformylglycinamidine cyclo-ligase (Synechococcus sp. (strain CC9605)).